Reading from the N-terminus, the 222-residue chain is N-(5'-phosphoribosyl)anthranilate isomerase (222 aa).

Belongs to the TrpF family.

It carries out the reaction N-(5-phospho-beta-D-ribosyl)anthranilate = 1-(2-carboxyphenylamino)-1-deoxy-D-ribulose 5-phosphate. Its pathway is amino-acid biosynthesis; L-tryptophan biosynthesis; L-tryptophan from chorismate: step 3/5. This chain is N-(5'-phosphoribosyl)anthranilate isomerase, found in Rhizobium rhizogenes (strain K84 / ATCC BAA-868) (Agrobacterium radiobacter).